The sequence spans 274 residues: Thymidylate synthase (274 aa).

R21 is a dUMP binding site. Residue H51 coordinates (6R)-5,10-methylene-5,6,7,8-tetrahydrofolate. R123 to R124 serves as a coordination point for dUMP. The active-site Nucleophile is the C156. DUMP contacts are provided by residues R176–D179, N187, and H217–Y219. D179 provides a ligand contact to (6R)-5,10-methylene-5,6,7,8-tetrahydrofolate. S273 contributes to the (6R)-5,10-methylene-5,6,7,8-tetrahydrofolate binding site.

The protein belongs to the thymidylate synthase family. Bacterial-type ThyA subfamily. Homodimer.

The protein resides in the cytoplasm. The enzyme catalyses dUMP + (6R)-5,10-methylene-5,6,7,8-tetrahydrofolate = 7,8-dihydrofolate + dTMP. Its pathway is pyrimidine metabolism; dTTP biosynthesis. In terms of biological role, catalyzes the reductive methylation of 2'-deoxyuridine-5'-monophosphate (dUMP) to 2'-deoxythymidine-5'-monophosphate (dTMP) while utilizing 5,10-methylenetetrahydrofolate (mTHF) as the methyl donor and reductant in the reaction, yielding dihydrofolate (DHF) as a by-product. This enzymatic reaction provides an intracellular de novo source of dTMP, an essential precursor for DNA biosynthesis. The sequence is that of Thymidylate synthase from Francisella philomiragia subsp. philomiragia (strain ATCC 25017 / CCUG 19701 / FSC 153 / O#319-036).